Here is a 314-residue protein sequence, read N- to C-terminus: tRNA-cytidine(32) 2-sulfurtransferase (314 aa).

Residues 49–54 (SGGKDS) carry the PP-loop motif motif. Cys-124, Cys-127, and Cys-215 together coordinate [4Fe-4S] cluster.

The protein belongs to the TtcA family. In terms of assembly, homodimer. It depends on Mg(2+) as a cofactor. [4Fe-4S] cluster serves as cofactor.

The protein resides in the cytoplasm. The catalysed reaction is cytidine(32) in tRNA + S-sulfanyl-L-cysteinyl-[cysteine desulfurase] + AH2 + ATP = 2-thiocytidine(32) in tRNA + L-cysteinyl-[cysteine desulfurase] + A + AMP + diphosphate + H(+). Its pathway is tRNA modification. Catalyzes the ATP-dependent 2-thiolation of cytidine in position 32 of tRNA, to form 2-thiocytidine (s(2)C32). The sulfur atoms are provided by the cysteine/cysteine desulfurase (IscS) system. The sequence is that of tRNA-cytidine(32) 2-sulfurtransferase from Histophilus somni (strain 129Pt) (Haemophilus somnus).